The sequence spans 274 residues: NADPH-dependent 7-cyano-7-deazaguanine reductase (274 aa).

A substrate-binding site is contributed by 80-82; that stretch reads VES. NADPH is bound at residue 82–83; it reads SK. The Thioimide intermediate role is filled by Cys181. The Proton donor role is filled by Asp188. Position 220–221 (220–221) interacts with substrate; sequence HE. Residue 249 to 250 participates in NADPH binding; that stretch reads RG.

Belongs to the GTP cyclohydrolase I family. QueF type 2 subfamily. As to quaternary structure, homodimer.

It localises to the cytoplasm. It carries out the reaction 7-aminomethyl-7-carbaguanine + 2 NADP(+) = 7-cyano-7-deazaguanine + 2 NADPH + 3 H(+). The protein operates within tRNA modification; tRNA-queuosine biosynthesis. In terms of biological role, catalyzes the NADPH-dependent reduction of 7-cyano-7-deazaguanine (preQ0) to 7-aminomethyl-7-deazaguanine (preQ1). In Burkholderia mallei (strain NCTC 10247), this protein is NADPH-dependent 7-cyano-7-deazaguanine reductase.